We begin with the raw amino-acid sequence, 393 residues long: Phospholipid-transporting ATPase accessory subunit CRF1 (393 aa).

Residues 1-46 (MGLILRWKEKKQLSSKQNAQKSRKPANTSFRQQRLKAWQPILSPQS) are Cytoplasmic-facing. A helical membrane pass occupies residues 47-67 (VLPLLILMACVFAPIGIGLVV). Topologically, residues 68-334 (STISVQRLVV…NSIIGAGNEA (267 aa)) are lumenal. Residues 70-332 (ISVQRLVVNY…TTNSIIGAGN (263 aa)) form a confers specificity for binding DNF3 region. Residues asparagine 78, asparagine 123, asparagine 187, asparagine 202, asparagine 213, asparagine 240, and asparagine 291 are each glycosylated (N-linked (GlcNAc...) asparagine). Intrachain disulfides connect cysteine 82–cysteine 126 and cysteine 179–cysteine 193. A helical membrane pass occupies residues 335–355 (LGIVYLIVAGIATLFAILFLI). At 356 to 393 (KVIFKPRPMHDHSYLNFENSDTPFDESSVVSIPLREIL) the chain is on the cytoplasmic side.

Belongs to the CDC50/LEM3 family. As to quaternary structure, component of a flippase complex consisting of DNF3 and YNR048W/CRF1. Interacts with DNF3; the interaction is direct and required for proper expression and endoplasmic reticulum (ER) export of either partner.

It localises to the golgi apparatus. The protein localises to the trans-Golgi network membrane. Accessory component of a P4-ATPase flippase complex which catalyzes the hydrolysis of ATP coupled to the transport of phosphatidylcholine and small amounts of phosphatidylethanolamine from the lumen to the cytosolic leaflet of the trans-Golgi network and ensures the maintenance of asymmetric distribution of phospholipids. May be involved in transport from early endosomes to the trans-Golgi network (TGN). The protein is Phospholipid-transporting ATPase accessory subunit CRF1 of Saccharomyces cerevisiae (strain ATCC 204508 / S288c) (Baker's yeast).